The chain runs to 316 residues: uncharacterized protein (316 aa).

The disordered stretch occupies residues 285 to 316; that stretch reads APEGDLGDIIEVDPSEPRSDPYRRLRTPPPGG. The segment covering 289–298 has biased composition (acidic residues); that stretch reads DLGDIIEVDP.

In terms of biological role, possibly necessary for replication. This is an uncharacterized protein from Halobacterium salinarum (Halobacterium halobium).